The chain runs to 336 residues: Cell division protein ZipA (336 aa).

At 1-2 (ME) the chain is on the periplasmic side. Residues 3–23 (LHILFFILAGLLIAVLIGFSL) traverse the membrane as a helical segment. At 24 to 336 (WSARREKSRI…SRQSYLARVS (313 aa)) the chain is on the cytoplasmic side. The segment at 57 to 76 (SLNPQSYAQTTGQHGETEAD) is disordered. Over residues 59–70 (NPQSYAQTTGQH) the composition is skewed to polar residues.

The protein belongs to the ZipA family. In terms of assembly, interacts with FtsZ via their C-terminal domains.

It is found in the cell inner membrane. Functionally, essential cell division protein that stabilizes the FtsZ protofilaments by cross-linking them and that serves as a cytoplasmic membrane anchor for the Z ring. Also required for the recruitment to the septal ring of downstream cell division proteins. The polypeptide is Cell division protein ZipA (Actinobacillus pleuropneumoniae serotype 7 (strain AP76)).